Here is a 751-residue protein sequence, read N- to C-terminus: Photosystem I P700 chlorophyll a apoprotein A1 (751 aa).

Helical transmembrane passes span 71 to 94, 157 to 180, 196 to 220, 292 to 310, 347 to 370, 386 to 412, 434 to 456, and 532 to 550; these read VFSAHFGQLSIIFLWLSGMYFHGA, LYCTAIGALIFASLMLFAGWFHYH, LNHHLAGLLGLGSLSWAGHQIHVSL, IAHHHLAIAILFLIAGHMY, WHAQLSLNLAMLGSTTIVVAHHMY, LSLFTHHMWIGGFLIVGAAAHAAIFMV, AIISHLNWVCIFLGFHSFGLYIH, and FLVHHIHAFTIHVTVLILL. [4Fe-4S] cluster-binding residues include Cys-574 and Cys-583. 2 consecutive transmembrane segments (helical) span residues 590–611 and 665–687; these read HVFLGLFWMYNSISVVIFHFSW and LSAYGLFFLGAHFVWAFSLMFLF. His-676 provides a ligand contact to chlorophyll a'. Chlorophyll a contacts are provided by Met-684 and Tyr-692. Trp-693 serves as a coordination point for phylloquinone. The chain crosses the membrane as a helical span at residues 725–745; the sequence is AVGVTHYLLGGIATTWAFFLA.

It belongs to the PsaA/PsaB family. The PsaA/B heterodimer binds the P700 chlorophyll special pair and subsequent electron acceptors. PSI consists of a core antenna complex that captures photons, and an electron transfer chain that converts photonic excitation into a charge separation. The eukaryotic PSI reaction center is composed of at least 11 subunits. P700 is a chlorophyll a/chlorophyll a' dimer, A0 is one or more chlorophyll a, A1 is one or both phylloquinones and FX is a shared 4Fe-4S iron-sulfur center. serves as cofactor.

The protein localises to the plastid. Its subcellular location is the chloroplast thylakoid membrane. It carries out the reaction reduced [plastocyanin] + hnu + oxidized [2Fe-2S]-[ferredoxin] = oxidized [plastocyanin] + reduced [2Fe-2S]-[ferredoxin]. In terms of biological role, psaA and PsaB bind P700, the primary electron donor of photosystem I (PSI), as well as the electron acceptors A0, A1 and FX. PSI is a plastocyanin-ferredoxin oxidoreductase, converting photonic excitation into a charge separation, which transfers an electron from the donor P700 chlorophyll pair to the spectroscopically characterized acceptors A0, A1, FX, FA and FB in turn. Oxidized P700 is reduced on the lumenal side of the thylakoid membrane by plastocyanin. This Zea mays (Maize) protein is Photosystem I P700 chlorophyll a apoprotein A1.